Here is a 646-residue protein sequence, read N- to C-terminus: Chaperone protein DnaK (646 aa).

Thr197 carries the post-translational modification Phosphothreonine; by autocatalysis. The segment at 599 to 646 (QQGAQAGADPNAGSSQGAQAGTDYGTSGPKTGTADDVDYEVVNDDNDK) is disordered. Positions 610 to 628 (AGSSQGAQAGTDYGTSGPK) are enriched in polar residues. A compositionally biased stretch (acidic residues) spans 633–646 (DDVDYEVVNDDNDK).

The protein belongs to the heat shock protein 70 family.

In terms of biological role, acts as a chaperone. This is Chaperone protein DnaK from Treponema denticola (strain ATCC 35405 / DSM 14222 / CIP 103919 / JCM 8153 / KCTC 15104).